Reading from the N-terminus, the 276-residue chain is Non-homologous end joining protein Ku (276 aa).

Residues 11–177 (ISFGLVHIPI…PEEIRSMEPL (167 aa)) form the Ku domain. The interval 256–276 (QVKTQQKKEAAPKKERRRKTS) is disordered.

The protein belongs to the prokaryotic Ku family. Homodimer. Interacts with LigD.

With LigD forms a non-homologous end joining (NHEJ) DNA repair enzyme, which repairs dsDNA breaks with reduced fidelity. Binds linear dsDNA with 5'- and 3'- overhangs but not closed circular dsDNA nor ssDNA. Recruits and stimulates the ligase activity of LigD. In Heliobacterium modesticaldum (strain ATCC 51547 / Ice1), this protein is Non-homologous end joining protein Ku.